The chain runs to 626 residues: Phosphomethylpyrimidine synthase (626 aa).

Over residues 92 to 106 the composition is skewed to basic and acidic residues; the sequence is AREVKPEDNGLKGPD. The segment at 92–117 is disordered; that stretch reads AREVKPEDNGLKGPDRSAGVPPFPNV. Substrate contacts are provided by residues N219, M248, Y277, H313, 333–335, 374–377, and E413; these read SRG and DGLR. H417 is a Zn(2+) binding site. Y440 contacts substrate. Position 481 (H481) interacts with Zn(2+). The [4Fe-4S] cluster site is built by C561, C564, and C569.

This sequence belongs to the ThiC family. In terms of assembly, homodimer. The cofactor is [4Fe-4S] cluster.

The catalysed reaction is 5-amino-1-(5-phospho-beta-D-ribosyl)imidazole + S-adenosyl-L-methionine = 4-amino-2-methyl-5-(phosphooxymethyl)pyrimidine + CO + 5'-deoxyadenosine + formate + L-methionine + 3 H(+). It functions in the pathway cofactor biosynthesis; thiamine diphosphate biosynthesis. In terms of biological role, catalyzes the synthesis of the hydroxymethylpyrimidine phosphate (HMP-P) moiety of thiamine from aminoimidazole ribotide (AIR) in a radical S-adenosyl-L-methionine (SAM)-dependent reaction. This is Phosphomethylpyrimidine synthase from Novosphingobium aromaticivorans (strain ATCC 700278 / DSM 12444 / CCUG 56034 / CIP 105152 / NBRC 16084 / F199).